The chain runs to 590 residues: Ankyrin repeat domain-containing protein 13A (590 aa).

ANK repeat units follow at residues 40–69 (RGRTLLHLAVSLGHLESARVLLRHKADVTK) and 73–102 (QGWTVLHEAVSTGDPEMVYTVLQHRDYHNT). The residue at position 205 (Ser-205) is a Phosphoserine. UIM domains lie at 483 to 502 (EDYEIMQFAIQQSLLESSRS), 519 to 538 (TYDAQYERAIQESLLTSTEG), 549 to 568 (RFDNDLQLAMELSAKELEEW), and 574 to 590 (EEEAELQQVLQLSLTDK). Ser-586 bears the Phosphoserine mark.

As to quaternary structure, interacts (via the UIM 3 and 4 repeats) with EGFR (ubiquitinated); the interaction is direct, inhibited by ANKRD13A monoubiquitination and may regulate EGFR internalization. Post-translationally, monoubiquitinated, inhibits interaction with ubiquitinated EGFR.

It localises to the cell membrane. The protein localises to the late endosome. Ubiquitin-binding protein that specifically recognizes and binds 'Lys-63'-linked ubiquitin. Does not bind 'Lys-48'-linked ubiquitin. Positively regulates the internalization of ligand-activated EGFR by binding to the Ub moiety of ubiquitinated EGFR at the cell membrane. This is Ankyrin repeat domain-containing protein 13A (ANKRD13A) from Homo sapiens (Human).